Here is a 518-residue protein sequence, read N- to C-terminus: Putative beta-xylosidase (518 aa).

Catalysis depends on D47, which acts as the Proton acceptor. The Proton donor role is filled by E203.

It belongs to the glycosyl hydrolase 43 family.

The enzyme catalyses Hydrolysis of (1-&gt;4)-beta-D-xylans, to remove successive D-xylose residues from the non-reducing termini.. The chain is Putative beta-xylosidase from Xylanibacter ruminicola (Prevotella ruminicola).